Reading from the N-terminus, the 154-residue chain is Transcriptional repressor NrdR (154 aa).

The segment at 3-34 (CPYCRHPDSRVVDSREADDGQLIRRRRSCPEC) is a zinc-finger region. In terms of domain architecture, ATP-cone spans 46–136 (LAVVKRSGVT…VYRSFESLAD (91 aa)).

Belongs to the NrdR family. The cofactor is Zn(2+).

Negatively regulates transcription of bacterial ribonucleotide reductase nrd genes and operons by binding to NrdR-boxes. This chain is Transcriptional repressor NrdR, found in Salinispora arenicola (strain CNS-205).